The following is a 203-amino-acid chain: Glycerol-3-phosphate acyltransferase (203 aa).

A run of 5 helical transmembrane segments spans residues 13-33 (TLAC…LILT), 62-82 (LAAA…AIAS), 88-108 (AGIA…WLSF), 118-138 (IGVL…IWLA), and 159-179 (IALY…MTAI).

Belongs to the PlsY family. In terms of assembly, probably interacts with PlsX.

Its subcellular location is the cell inner membrane. It carries out the reaction an acyl phosphate + sn-glycerol 3-phosphate = a 1-acyl-sn-glycero-3-phosphate + phosphate. It participates in lipid metabolism; phospholipid metabolism. In terms of biological role, catalyzes the transfer of an acyl group from acyl-phosphate (acyl-PO(4)) to glycerol-3-phosphate (G3P) to form lysophosphatidic acid (LPA). This enzyme utilizes acyl-phosphate as fatty acyl donor, but not acyl-CoA or acyl-ACP. The polypeptide is Glycerol-3-phosphate acyltransferase (Rhizobium meliloti (strain 1021) (Ensifer meliloti)).